Reading from the N-terminus, the 461-residue chain is Steroidogenic factor 1 (461 aa).

The nuclear receptor DNA-binding region spans 10–85 (DELCPVCGDK…VGMRLEAVRA (76 aa)). An NR C4-type zinc finger spans residues 13 to 33 (CPVCGDKVSGYHYGLLTCESC). Lys-34, Lys-38, and Lys-72 each carry N6-acetyllysine. Residues 49–73 (CTESQSCKIDKTLRKRCPFCRFQKC) form an NR C4-type zinc finger. Lys-119 participates in a covalent cross-link: Glycyl lysine isopeptide (Lys-Gly) (interchain with G-Cter in SUMO). Positions 119-153 (KLETGPPMGVPPPPPPPPDYMLPPGLHVPEPKGLA) are disordered. Residues 126 to 139 (MGVPPPPPPPPDYM) show a composition bias toward pro residues. Lys-194 participates in a covalent cross-link: Glycyl lysine isopeptide (Lys-Gly) (interchain with G-Cter in SUMO). Phosphoserine; by CDK7 is present on Ser-203. Residues 222-459 (GVPELILQLL…NLLIEMLQAK (238 aa)) form the NR LBD domain. Positions 341, 436, and 440 each coordinate a 1,2-diacyl-sn-glycero-3-phosphocholine.

This sequence belongs to the nuclear hormone receptor family. NR5 subfamily. As to quaternary structure, binds DNA as a monomer. Part of a complex consisting of SFPQ, NONO and NR5A1. Interacts with NR0B2. Interacts with DGKQ and CDK7. Binds to and activated by HIPK3. Acetylation stimulates the transcriptional activity. In terms of processing, sumoylation reduces CDK7-mediated phosphorylation on Ser-203. Post-translationally, phosphorylated on Ser-203 by CDK7. This phosphorylation promotes transcriptional activity.

Its subcellular location is the nucleus. In terms of biological role, transcriptional activator. Seems to be essential for sexual differentiation and formation of the primary steroidogenic tissues. Binds to the Ad4 site found in the promoter region of steroidogenic P450 genes such as CYP11A, CYP11B and CYP21B. Also regulates the AMH/Muellerian inhibiting substance gene as well as the AHCH and STAR genes. 5'-YCAAGGYC-3' and 5'-RRAGGTCA-3' are the consensus sequences for the recognition by NR5A1. The SFPQ-NONO-NR5A1 complex binds to the CYP17 promoter and regulates basal and cAMP-dependent transcriptional activity. Binds phospholipids with a phosphatidylinositol (PI) headgroup, in particular PI(3,4)P2 and PI(3,4,5)P3. Activated by the phosphorylation of NR5A1 by HIPK3 leading to increased steroidogenic gene expression upon cAMP signaling pathway stimulation. The polypeptide is Steroidogenic factor 1 (NR5A1) (Equus caballus (Horse)).